The following is an 886-amino-acid chain: DNA double-strand break repair Rad50 ATPase (886 aa).

ATP-binding positions include 32 to 38 and glutamine 137; that span reads NGAGKSS. Coiled-coil stretches lie at residues 181–240 and 320–416; these read IRSL…KEIK and RKKE…GDLN. The Zinc-hook domain occupies 391 to 489; it reads IKDVSDRINQ…EREELEATRN (99 aa). Residues cysteine 437 and cysteine 440 each contribute to the Zn(2+) site. Coiled-coil stretches lie at residues 450 to 657 and 682 to 718; these read AKIR…ISEL and EADK…EESK.

The protein belongs to the SMC family. RAD50 subfamily. In terms of assembly, homodimer. Forms a heterotetramer composed of two Mre11 subunits and two Rad50 subunits. Interacts with Mre11 and HerA. Zn(2+) serves as cofactor.

Part of the Rad50/Mre11 complex, which is involved in the early steps of DNA double-strand break (DSB) repair. The complex may facilitate opening of the processed DNA ends to aid in the recruitment of HerA and NurA. Rad50 controls the balance between DNA end bridging and DNA resection via ATP-dependent structural rearrangements of the Rad50/Mre11 complex. The polypeptide is DNA double-strand break repair Rad50 ATPase (Sulfolobus acidocaldarius (strain ATCC 33909 / DSM 639 / JCM 8929 / NBRC 15157 / NCIMB 11770)).